A 777-amino-acid polypeptide reads, in one-letter code: Ribosome biogenesis protein ERB1 (777 aa).

Positions 1–122 are disordered; it reads MAPTAPAKKR…RPNYRVVEDA (122 aa). The segment covering 36–67 has biased composition (acidic residues); that stretch reads SEDDSDFVASGDEDEEDEDEDEDEDKDEDDEH. WD repeat units follow at residues 430-469, 473-513, 562-604, 606-645, 648-687, 691-731, and 747-777; these read GHEG…QVWA, SSDE…PEVE, TVRS…SQIP, RKLS…LVKV, PGAR…RPYK, FHPQ…DLME, and VDSL…RLWM.

The protein belongs to the WD repeat BOP1/ERB1 family. In terms of assembly, component of the NOP7 complex, composed of ERB1, NOP7 and YTM1. The complex is held together by ERB1, which interacts with NOP7 via its N-terminal domain and with YTM1 via a high-affinity interaction between the seven-bladed beta-propeller domains of the 2 proteins. The NOP7 complex associates with the 66S pre-ribosome.

The protein localises to the nucleus. It is found in the nucleolus. Its subcellular location is the nucleoplasm. Functionally, component of the NOP7 complex, which is required for maturation of the 25S and 5.8S ribosomal RNAs and formation of the 60S ribosome. The sequence is that of Ribosome biogenesis protein ERB1 from Pyricularia oryzae (strain 70-15 / ATCC MYA-4617 / FGSC 8958) (Rice blast fungus).